The chain runs to 75 residues: UPF0270 protein Pfl01_4103 (75 aa).

This sequence belongs to the UPF0270 family.

This Pseudomonas fluorescens (strain Pf0-1) protein is UPF0270 protein Pfl01_4103.